The primary structure comprises 488 residues: Ribulose bisphosphate carboxylase large chain (488 aa).

Positions 127 and 177 each coordinate substrate. Residue K179 is the Proton acceptor of the active site. K181 lines the substrate pocket. The Mg(2+) site is built by K205, D207, and E208. K205 bears the N6-carboxylysine mark. Residue H297 is the Proton acceptor of the active site. Residues R298, H330, and S382 each contribute to the substrate site.

This sequence belongs to the RuBisCO large chain family. Type I subfamily. As to quaternary structure, heterohexadecamer of 8 large chains and 8 small chains. The cofactor is Mg(2+).

Its subcellular location is the plastid. It localises to the chloroplast. The enzyme catalyses 2 (2R)-3-phosphoglycerate + 2 H(+) = D-ribulose 1,5-bisphosphate + CO2 + H2O. The catalysed reaction is D-ribulose 1,5-bisphosphate + O2 = 2-phosphoglycolate + (2R)-3-phosphoglycerate + 2 H(+). Its function is as follows. RuBisCO catalyzes two reactions: the carboxylation of D-ribulose 1,5-bisphosphate, the primary event in carbon dioxide fixation, as well as the oxidative fragmentation of the pentose substrate in the photorespiration process. Both reactions occur simultaneously and in competition at the same active site. This chain is Ribulose bisphosphate carboxylase large chain, found in Pyropia suborbiculata (Red alga).